A 186-amino-acid chain; its full sequence is Dynactin subunit 3 (186 aa).

Residue Ala2 is modified to N-acetylalanine.

The protein belongs to the dynactin subunit 3 family. In terms of assembly, subunit of dynactin, a multiprotein complex part of a tripartite complex with dynein and a adapter, such as BICDL1, BICD2 or HOOK3. The dynactin complex is built around ACTR1A/ACTB filament and consists of an actin-related filament composed of a shoulder domain, a pointed end and a barbed end. Its length is defined by its flexible shoulder domain. The soulder is composed of 2 DCTN1 subunits, 4 DCTN2 and 2 DCTN3. The 4 DCNT2 (via N-terminus) bind the ACTR1A filament and act as molecular rulers to determine the length. The pointed end is important for binding dynein-dynactin cargo adapters. Consists of 4 subunits: ACTR10, DCNT4, DCTN5 and DCTN6. The barbed end is composed of a CAPZA1:CAPZB heterodimers, which binds ACTR1A/ACTB filament and dynactin and stabilizes dynactin.

It localises to the cytoplasm. The protein localises to the cytoskeleton. It is found in the microtubule organizing center. The protein resides in the centrosome. Its subcellular location is the chromosome. It localises to the centromere. The protein localises to the kinetochore. It is found in the spindle. The protein resides in the cleavage furrow. Its subcellular location is the midbody. Functionally, part of the dynactin complex that activates the molecular motor dynein for ultra-processive transport along microtubules. Together with dynein is involved in spindle assembly and cytokinesis. The polypeptide is Dynactin subunit 3 (Sus scrofa (Pig)).